The following is a 505-amino-acid chain: Ion-translocating oxidoreductase complex subunit C (505 aa).

4Fe-4S ferredoxin-type domains lie at Glu381 to Tyr410 and Lys420 to Tyr449. Positions 390, 393, 396, 400, 429, 432, 435, and 439 each coordinate [4Fe-4S] cluster.

It belongs to the 4Fe4S bacterial-type ferredoxin family. RnfC subfamily. As to quaternary structure, the complex is composed of six subunits: RnfA, RnfB, RnfC, RnfD, RnfE and RnfG. [4Fe-4S] cluster serves as cofactor.

The protein localises to the cell inner membrane. Its function is as follows. Part of a membrane-bound complex that couples electron transfer with translocation of ions across the membrane. This Buchnera aphidicola subsp. Baizongia pistaciae (strain Bp) protein is Ion-translocating oxidoreductase complex subunit C.